The primary structure comprises 248 residues: Orotidine 5'-phosphate decarboxylase (248 aa).

Substrate-binding positions include Asp-22, Lys-44, 71–80 (DLKFHDIPNT), Thr-131, Arg-192, Gln-201, Gly-221, and Arg-222. Lys-73 functions as the Proton donor in the catalytic mechanism.

This sequence belongs to the OMP decarboxylase family. Type 1 subfamily. Homodimer.

The enzyme catalyses orotidine 5'-phosphate + H(+) = UMP + CO2. It participates in pyrimidine metabolism; UMP biosynthesis via de novo pathway; UMP from orotate: step 2/2. Functionally, catalyzes the decarboxylation of orotidine 5'-monophosphate (OMP) to uridine 5'-monophosphate (UMP). The protein is Orotidine 5'-phosphate decarboxylase of Photorhabdus laumondii subsp. laumondii (strain DSM 15139 / CIP 105565 / TT01) (Photorhabdus luminescens subsp. laumondii).